A 434-amino-acid polypeptide reads, in one-letter code: Homoserine dehydrogenase (434 aa).

NADPH contacts are provided by Thr13 and Val14. NAD(+) is bound by residues Val14, Ala33, and Ala43. Val14 provides a ligand contact to NADP(+). NADPH is bound at residue Arg45. 3 residues coordinate NADP(+): Arg45, Arg46, and Lys103. Lys103 is a binding site for NADPH. Glu127, Val130, Gly132, and Ile134 together coordinate Na(+). Residues Gly185 and Glu188 each coordinate NADP(+). The L-homoserine site is built by Glu188 and Asp199. The active-site Proton donor is Lys203. Residue Gly300 coordinates NADPH. Gly300 serves as a coordination point for NAD(+). NADP(+) is bound at residue Gly300. Positions 353–429 (YLRIQAKDHP…GVSGPVVRIR (77 aa)) constitute an ACT domain.

This sequence belongs to the homoserine dehydrogenase family. A metal cation serves as cofactor.

It carries out the reaction L-homoserine + NADP(+) = L-aspartate 4-semialdehyde + NADPH + H(+). The enzyme catalyses L-homoserine + NAD(+) = L-aspartate 4-semialdehyde + NADH + H(+). Its pathway is amino-acid biosynthesis; L-methionine biosynthesis via de novo pathway; L-homoserine from L-aspartate: step 3/3. The protein operates within amino-acid biosynthesis; L-threonine biosynthesis; L-threonine from L-aspartate: step 3/5. Feedback inhibition by threonine. In terms of biological role, catalyzes the conversion of L-aspartate-beta-semialdehyde (L-Asa) to L-homoserine (L-Hse), the third step in the biosynthesis of threonine and methionine from aspartate. This is Homoserine dehydrogenase (hom) from Pseudomonas aeruginosa (strain ATCC 15692 / DSM 22644 / CIP 104116 / JCM 14847 / LMG 12228 / 1C / PRS 101 / PAO1).